Reading from the N-terminus, the 195-residue chain is FMN-dependent NADH:quinone oxidoreductase (195 aa).

FMN-binding positions include Ser9, 15 to 17 (SVS), 85 to 88 (MYNF), and 129 to 132 (SRGG).

The protein belongs to the azoreductase type 1 family. In terms of assembly, homodimer. Requires FMN as cofactor.

The catalysed reaction is 2 a quinone + NADH + H(+) = 2 a 1,4-benzosemiquinone + NAD(+). It carries out the reaction N,N-dimethyl-1,4-phenylenediamine + anthranilate + 2 NAD(+) = 2-(4-dimethylaminophenyl)diazenylbenzoate + 2 NADH + 2 H(+). Quinone reductase that provides resistance to thiol-specific stress caused by electrophilic quinones. Its function is as follows. Also exhibits azoreductase activity. Catalyzes the reductive cleavage of the azo bond in aromatic azo compounds to the corresponding amines. This chain is FMN-dependent NADH:quinone oxidoreductase, found in Stenotrophomonas maltophilia (strain K279a).